Reading from the N-terminus, the 153-residue chain is Putative nuclear shuttle protein (153 aa).

This sequence belongs to the nanoviridae nuclear shuttle protein family.

The protein resides in the host nucleus. It is found in the host cytoplasm. Its function is as follows. Putative nuclear shuttle protein. The protein is Putative nuclear shuttle protein (DNA-N) of Faba bean necrotic yellows virus (isolate Syrian SV292-88) (FBNYV).